The following is a 214-amino-acid chain: Pyridoxine/pyridoxamine 5'-phosphate oxidase (214 aa).

Substrate-binding positions include Arg8–Tyr11 and Lys66. FMN is bound by residues Arg61–Lys66, Phe76–Thr77, Arg82, Lys83, and Gln105. Tyr123, Arg127, and Ser131 together coordinate substrate. FMN contacts are provided by residues Gln140 to Ser141 and Trp184. Arg190–His192 is a substrate binding site. Arg194 contacts FMN.

It belongs to the pyridoxamine 5'-phosphate oxidase family. In terms of assembly, homodimer. The cofactor is FMN.

It carries out the reaction pyridoxamine 5'-phosphate + O2 + H2O = pyridoxal 5'-phosphate + H2O2 + NH4(+). The catalysed reaction is pyridoxine 5'-phosphate + O2 = pyridoxal 5'-phosphate + H2O2. Its pathway is cofactor metabolism; pyridoxal 5'-phosphate salvage; pyridoxal 5'-phosphate from pyridoxamine 5'-phosphate: step 1/1. It functions in the pathway cofactor metabolism; pyridoxal 5'-phosphate salvage; pyridoxal 5'-phosphate from pyridoxine 5'-phosphate: step 1/1. Catalyzes the oxidation of either pyridoxine 5'-phosphate (PNP) or pyridoxamine 5'-phosphate (PMP) into pyridoxal 5'-phosphate (PLP). The polypeptide is Pyridoxine/pyridoxamine 5'-phosphate oxidase (Burkholderia lata (strain ATCC 17760 / DSM 23089 / LMG 22485 / NCIMB 9086 / R18194 / 383)).